The following is a 425-amino-acid chain: Enolase 2 (425 aa).

A (2R)-2-phosphoglycerate-binding site is contributed by Gln163. The active-site Proton donor is Glu205. Asp242, Glu285, and Asp312 together coordinate Mg(2+). (2R)-2-phosphoglycerate is bound by residues Lys337, Arg366, Ser367, and Lys388. Lys337 functions as the Proton acceptor in the catalytic mechanism.

This sequence belongs to the enolase family. Mg(2+) serves as cofactor.

Its subcellular location is the cytoplasm. It is found in the secreted. It localises to the cell surface. The catalysed reaction is (2R)-2-phosphoglycerate = phosphoenolpyruvate + H2O. It participates in carbohydrate degradation; glycolysis; pyruvate from D-glyceraldehyde 3-phosphate: step 4/5. In terms of biological role, catalyzes the reversible conversion of 2-phosphoglycerate (2-PG) into phosphoenolpyruvate (PEP). It is essential for the degradation of carbohydrates via glycolysis. This is Enolase 2 from Cupriavidus metallidurans (strain ATCC 43123 / DSM 2839 / NBRC 102507 / CH34) (Ralstonia metallidurans).